The chain runs to 525 residues: FNIP repeat-containing protein DDB_G0274617 (525 aa).

One copy of the FNIP repeat lies at Tyr65–Tyr107.

The sequence is that of FNIP repeat-containing protein DDB_G0274617 from Dictyostelium discoideum (Social amoeba).